The primary structure comprises 320 residues: Metapyrocatechase 2 (320 aa).

Disordered regions lie at residues Met1–His21 and Gly131–Gly153. 2 consecutive VOC domains span residues Ser25–Gly131 and Arg167–Asp282. His170, His227, and Glu278 together coordinate Fe cation.

The protein belongs to the extradiol ring-cleavage dioxygenase family. The cofactor is Fe(2+).

It carries out the reaction catechol + O2 = (2Z,4E)-2-hydroxy-6-oxohexa-2,4-dienoate + H(+). The sequence is that of Metapyrocatechase 2 (mcpII) from Cupriavidus necator (Alcaligenes eutrophus).